Consider the following 212-residue polypeptide: Probable nicotinate-nucleotide adenylyltransferase (212 aa).

It belongs to the NadD family.

It carries out the reaction nicotinate beta-D-ribonucleotide + ATP + H(+) = deamido-NAD(+) + diphosphate. Its pathway is cofactor biosynthesis; NAD(+) biosynthesis; deamido-NAD(+) from nicotinate D-ribonucleotide: step 1/1. Its function is as follows. Catalyzes the reversible adenylation of nicotinate mononucleotide (NaMN) to nicotinic acid adenine dinucleotide (NaAD). This is Probable nicotinate-nucleotide adenylyltransferase from Methylibium petroleiphilum (strain ATCC BAA-1232 / LMG 22953 / PM1).